The primary structure comprises 288 residues: Diaminopimelate epimerase (288 aa).

Substrate-binding residues include Asn14 and Asn67. Cys76 functions as the Proton donor in the catalytic mechanism. Substrate-binding positions include 77 to 78 (GN), Asn166, Asn199, and 217 to 218 (ER). The Proton acceptor role is filled by Cys226. A substrate-binding site is contributed by 227-228 (GT).

It belongs to the diaminopimelate epimerase family. As to quaternary structure, homodimer.

The protein localises to the cytoplasm. The enzyme catalyses (2S,6S)-2,6-diaminopimelate = meso-2,6-diaminopimelate. Its pathway is amino-acid biosynthesis; L-lysine biosynthesis via DAP pathway; DL-2,6-diaminopimelate from LL-2,6-diaminopimelate: step 1/1. Functionally, catalyzes the stereoinversion of LL-2,6-diaminopimelate (L,L-DAP) to meso-diaminopimelate (meso-DAP), a precursor of L-lysine and an essential component of the bacterial peptidoglycan. The chain is Diaminopimelate epimerase from Bacillus cereus (strain AH820).